Here is a 125-residue protein sequence, read N- to C-terminus: Small ribosomal subunit protein uS13 (125 aa).

Positions 94–125 (SLPVRGQRTRTNARTRKGKRKTVAGKKKAVKK) are disordered.

This sequence belongs to the universal ribosomal protein uS13 family. Part of the 30S ribosomal subunit. Forms a loose heterodimer with protein S19. Forms two bridges to the 50S subunit in the 70S ribosome.

Located at the top of the head of the 30S subunit, it contacts several helices of the 16S rRNA. In the 70S ribosome it contacts the 23S rRNA (bridge B1a) and protein L5 of the 50S subunit (bridge B1b), connecting the 2 subunits; these bridges are implicated in subunit movement. Contacts the tRNAs in the A and P-sites. In Chlorobium chlorochromatii (strain CaD3), this protein is Small ribosomal subunit protein uS13.